The chain runs to 131 residues: MPEETLLAFDFGEKKIGVAIGNTLTCHARPLEIIFSERRDERFGRIQALLEAWRPQRVVVGLALATDGGDQPATLRCRRFANQLHGRFGVTVELVDERGSSMEAQEKLGSHAPDDAMAAAIILQRYLDRLA.

Belongs to the YqgF nuclease family.

Its subcellular location is the cytoplasm. Could be a nuclease involved in processing of the 5'-end of pre-16S rRNA. This chain is Putative pre-16S rRNA nuclease, found in Bordetella avium (strain 197N).